Reading from the N-terminus, the 181-residue chain is Mating-type M-specific polypeptide Mc (181 aa).

Positions 103–171 (TPRPPNAFIL…QHQKMYPGYK (69 aa)) form a DNA-binding region, HMG box.

The protein localises to the nucleus. Its subcellular location is the cytoplasm. It localises to the cytoskeleton. The protein resides in the microtubule organizing center. It is found in the spindle pole body. In terms of biological role, mating type proteins are sequence specific DNA-binding proteins that act as master switches in yeast differentiation by controlling gene expression in a cell type-specific fashion. Positive regulator of MFM genes. The HMG box recognizes the DNA sequence 5'-AACAAAG-3'. Required for conjugation and efficient meiosis. The polypeptide is Mating-type M-specific polypeptide Mc (mat3-Mc) (Schizosaccharomyces pombe (Fission yeast)).